The sequence spans 478 residues: Ribosome biogenesis protein NOP53 (478 aa).

The span at 1-10 shows a compositional bias: gly residues; the sequence is MAAGGSGVGG. Residues 1–51 form a disordered region; that stretch reads MAAGGSGVGGKRSSKSDADSGFLGLRPTSVDPALRRRRRGPRNKKRGWRRL. Alanine 2 is modified (N-acetylalanine). The residue at position 29 (serine 29) is a Phosphoserine. Residues 35–49 are compositionally biased toward basic residues; it reads RRRRRGPRNKKRGWR. Residues serine 93 and serine 305 each carry the phosphoserine modification. The interval 148–431 is mediates interaction with CDKN2A/isoform tumor suppressor ARF; the sequence is KEQLWEKLAK…SELTDSLRTL (284 aa). The mediates interaction with NF2 stretch occupies residues 181-478; sequence KPGPQDTVER…EKRAFREIQL (298 aa). The tract at residues 303 to 344 is disordered; sequence EESDGEGEPGQGEGPEAGDAEVCPTPARLATTEKKTEQQRRR. Basic and acidic residues predominate over residues 333-342; sequence TTEKKTEQQR. The interval 342-386 is mediates interaction with human herpesvirus 8 protein ORF16; that stretch reads RRREKAVHRLRVQQAALRAARLRHQELFRLRGIKAQVALRLAELA. Nucleolar localization signal stretches follow at residues 347-395 and 396-478; these read AVHR…RQAR and REAE…EIQL.

The protein belongs to the NOP53 family. In terms of assembly, homooligomer. Interacts with PTEN; regulates PTEN phosphorylation and increases its stability. Interacts with RPL11; retains RPL11 into the nucleolus. Interacts with CDKN2A/isoform tumor suppressor ARF; the interaction is direct and promotes ARF nucleoplasmic relocalization and ubiquitin-mediated proteasomal degradation. Interacts with NPM1; the interaction is direct and competitive with MYC. Interacts with NF2 (via FERM domain); the interaction is direct. Interacts with p53/TP53 (via the oligomerization region); the interaction is direct and may prevent the MDM2-mediated proteasomal degradation of p53/TP53. Interacts with RIGI; may regulate RIGI through USP15-mediated 'Lys-63'-linked deubiquitination. Interacts with UBTF. As to quaternary structure, (Microbial infection) Interacts with herpes simplex virus 1 early proteins ICP22 and ICP0. (Microbial infection) Interacts with Human herpesvirus 8 protein ORF16; may sequester ORF16 in host nucleolus and reduce its antiapoptotic activity. In terms of processing, ubiquitin-mediated proteasomal degradation is regulated by c-JUN. It is associated with relocalization to the nucleoplasm and decreased homooligomerization. Phosphorylated upon DNA damage probably by ATM and DNA-PK; may regulate NOP53 degradation. As to expression, expressed at high levels in heart and pancreas, moderate levels in placenta, liver, skeletal muscle, and kidney, and low levels in brain and lung.

Its subcellular location is the nucleus. The protein resides in the nucleolus. The protein localises to the nucleoplasm. Nucleolar protein which is involved in the integration of the 5S RNP into the ribosomal large subunit during ribosome biogenesis. In ribosome biogenesis, may also play a role in rRNA transcription. Also functions as a nucleolar sensor that regulates the activation of p53/TP53 in response to ribosome biogenesis perturbation, DNA damage and other stress conditions. DNA damage or perturbation of ribosome biogenesis disrupt the interaction between NOP53 and RPL11 allowing RPL11 transport to the nucleoplasm where it can inhibit MDM2 and allow p53/TP53 activation. It may also positively regulate the function of p53/TP53 in cell cycle arrest and apoptosis through direct interaction, preventing its MDM2-dependent ubiquitin-mediated proteasomal degradation. Originally identified as a tumor suppressor, it may also play a role in cell proliferation and apoptosis by positively regulating the stability of PTEN, thereby antagonizing the PI3K-AKT/PKB signaling pathway. May also inhibit cell proliferation and increase apoptosis through its interaction with NF2. May negatively regulate NPM1 by regulating its nucleoplasmic localization, oligomerization and ubiquitin-mediated proteasomal degradation. Thereby, may prevent NPM1 interaction with MYC and negatively regulate transcription mediated by the MYC-NPM1 complex. May also regulate cellular aerobic respiration. In the cellular response to viral infection, may play a role in the attenuation of interferon-beta through the inhibition of RIGI. This is Ribosome biogenesis protein NOP53 from Homo sapiens (Human).